The sequence spans 851 residues: Transforming growth factor beta receptor type 3 (851 aa).

Positions 1-20 (MTSHYVIAIFALMSSCLATA) are cleaved as a signal peptide. The Extracellular segment spans residues 21-787 (GPEPGALCEL…IFHGLDTLTV (767 aa)). Cysteine 52 and cysteine 197 are joined by a disulfide. N-linked (GlcNAc...) asparagine glycosylation is found at asparagine 141 and asparagine 492. The 276-residue stretch at 455–730 (KCDNEKMIVA…PKCVPPDEAC (276 aa)) folds into the ZP domain. O-linked (Xyl...) (glycosaminoglycan) serine glycans are attached at residues serine 534 and serine 545. 3 N-linked (GlcNAc...) asparagine glycosylation sites follow: asparagine 571, asparagine 590, and asparagine 697. 3 disulfides stabilise this stretch: cysteine 639–cysteine 705, cysteine 660–cysteine 730, and cysteine 710–cysteine 723. Residues 737–751 (IIWAMMQNKKTFTKP) are interaction with TGF-beta ligand. The chain crosses the membrane as a helical span at residues 788-809 (MGIAFAAFVIGALLTGALWYIY). Residues 810-851 (SHTGETAGRQQVPTSPPASENSSAAHSIGSTQSTPCSSSSTA) lie on the Cytoplasmic side of the membrane. Residues 816–851 (AGRQQVPTSPPASENSSAAHSIGSTQSTPCSSSSTA) are disordered. The span at 817 to 834 (GRQQVPTSPPASENSSAA) shows a compositional bias: polar residues. Residues 836-851 (SIGSTQSTPCSSSSTA) are compositionally biased toward low complexity. Position 840 is a phosphothreonine (threonine 840).

Forms homodimers and homooligomers. Interacts with DYNLT4. Interacts with integrin ITGA5:ITGB1; this interaction promotes the internalization and trafficking of ITGA5:ITGB1 into endocytic vesicles. Interacts with TGFB1, BMP2, BMP5, BMP7 or GDF5 and inhibin A via the ligand binding domains. Interacts with ALK3/BMPR1A; this interaction results in the cell surface retention of BMPR1A. Interacts with ALK6/BMPR1B; this interaction enhances BMPR1B-mediated stimulation of the BMP signaling pathway. Interacts with the scaffolding protein beta-arrestin2/ARRB2; this interaction mediates internalization of TGFBR3 and thus regulates migration, actin cytoskeleton and activation of CDC42. In terms of assembly, (Microbial infection) Interacts with human cytomegalovirus trimer complex composed of gH, gL, and gO; these interactions may promote HCMV cell entry in specific cell types. Extensively modified by glycosaminoglycan groups (GAG). In terms of processing, phosphorylated in the cytoplasmic domain by the type II receptor TGFBR2 at THR-840 to mediate recruitment of ARRB2 and subsequent internalization of TGFBR2 and TGFBR3.

The protein localises to the cell membrane. It is found in the secreted. The protein resides in the extracellular space. It localises to the extracellular matrix. Functionally, cell surface receptor that regulates diverse cellular processes including cell proliferation, differentiation, migration, and apoptosis. Initiates BMP, inhibin, and TGF-beta signaling pathways by interacting with different ligands including TGFB1, BMP2, BMP5, BMP7 or GDF5. Alternatively, acts as a cell surface coreceptor for BMP ligands, serving to enhance ligand binding by differentially regulating BMPR1A/ALK3 and BMPR1B/ALK6 receptor trafficking. Promotes epithelial cell adhesion, focal adhesion formation and integrin signaling during epithelial cell spreading on fibronectin. By interacting with the scaffolding protein beta-arrestin2/ARRB2, regulates migration or actin cytoskeleton and promotes the activation of CDC42 as well as the inhibition of NF-kappa-B. In gonadotrope cells, acts as an inhibin A coreceptor and regulates follicle-stimulating hormone (FSH) levels and female fertility. Plays a role in the inhibition of directed and random cell migration in epithelial cells by altering the actin cytoskeletal organization. Participates in epithelial-mesenchymal transformation (EMT) upon binding to BMP2 or TGFB2, by activating the PAR6/SMURF1/RHOA pathway. Its function is as follows. (Microbial infection) May act as a receptor for human cytomegalovirus in different cell types by interacting with HCMV trimer composed of GO, GH and GL. The protein is Transforming growth factor beta receptor type 3 of Homo sapiens (Human).